Reading from the N-terminus, the 409-residue chain is Serine/threonine transporter SstT (409 aa).

The next 9 membrane-spanning stretches (helical) occupy residues 24–44 (LALG…AGLF), 48–68 (FVGA…AATI), 82–102 (IIVL…IAGM), 142–162 (AIAN…GAAL), 194–214 (LGIF…ALAG), 218–238 (LLAV…PAIV), 292–312 (IPLG…VLAM), 319–339 (GIQV…VSAC), and 365–385 (VAMQ…SAET).

This sequence belongs to the dicarboxylate/amino acid:cation symporter (DAACS) (TC 2.A.23) family.

The protein resides in the cell inner membrane. The enzyme catalyses L-serine(in) + Na(+)(in) = L-serine(out) + Na(+)(out). It carries out the reaction L-threonine(in) + Na(+)(in) = L-threonine(out) + Na(+)(out). Its function is as follows. Involved in the import of serine and threonine into the cell, with the concomitant import of sodium (symport system). In Neisseria meningitidis serogroup C (strain 053442), this protein is Serine/threonine transporter SstT.